The chain runs to 222 residues: uncharacterized protein (222 aa).

The protein belongs to the ycf73 family.

Its subcellular location is the plastid. The protein resides in the chloroplast. This is an uncharacterized protein from Oryza nivara (Indian wild rice).